The primary structure comprises 154 residues: 6,7-dimethyl-8-ribityllumazine synthase (154 aa).

Residues F22, 56-58, and 81-83 contribute to the 5-amino-6-(D-ribitylamino)uracil site; these read AFE and VLI. 86-87 provides a ligand contact to (2S)-2-hydroxy-3-oxobutyl phosphate; it reads ET. H89 functions as the Proton donor in the catalytic mechanism. 5-amino-6-(D-ribitylamino)uracil is bound at residue L114. Residue R128 participates in (2S)-2-hydroxy-3-oxobutyl phosphate binding.

It belongs to the DMRL synthase family.

It carries out the reaction (2S)-2-hydroxy-3-oxobutyl phosphate + 5-amino-6-(D-ribitylamino)uracil = 6,7-dimethyl-8-(1-D-ribityl)lumazine + phosphate + 2 H2O + H(+). The protein operates within cofactor biosynthesis; riboflavin biosynthesis; riboflavin from 2-hydroxy-3-oxobutyl phosphate and 5-amino-6-(D-ribitylamino)uracil: step 1/2. Its function is as follows. Catalyzes the formation of 6,7-dimethyl-8-ribityllumazine by condensation of 5-amino-6-(D-ribitylamino)uracil with 3,4-dihydroxy-2-butanone 4-phosphate. This is the penultimate step in the biosynthesis of riboflavin. The polypeptide is 6,7-dimethyl-8-ribityllumazine synthase (Chlamydia pneumoniae (Chlamydophila pneumoniae)).